Here is a 398-residue protein sequence, read N- to C-terminus: Argininosuccinate synthase (398 aa).

10 to 18 is an ATP binding site; the sequence is AYSGGLDTS. An L-citrulline-binding site is contributed by Tyr87. Gly117 lines the ATP pocket. L-aspartate is bound by residues Thr119, Asn123, and Asp124. Asn123 is a binding site for L-citrulline. Residues Arg127, Ser175, Glu260, and Tyr272 each contribute to the L-citrulline site.

This sequence belongs to the argininosuccinate synthase family. Type 1 subfamily. In terms of assembly, homotetramer.

It is found in the cytoplasm. The enzyme catalyses L-citrulline + L-aspartate + ATP = 2-(N(omega)-L-arginino)succinate + AMP + diphosphate + H(+). It participates in amino-acid biosynthesis; L-arginine biosynthesis; L-arginine from L-ornithine and carbamoyl phosphate: step 2/3. The protein is Argininosuccinate synthase of Lactococcus lactis subsp. lactis (strain IL1403) (Streptococcus lactis).